Here is a 476-residue protein sequence, read N- to C-terminus: Bifunctional protein HldE (476 aa).

Residues 1 to 319 (MKVSLPAFEK…EALALHHGES (319 aa)) are ribokinase. 195–198 (NMSE) provides a ligand contact to ATP. Residue D264 is part of the active site. Residues 345–476 (MTNGCFDILH…AIIQNIMANQ (132 aa)) are cytidylyltransferase.

The protein in the N-terminal section; belongs to the carbohydrate kinase PfkB family. It in the C-terminal section; belongs to the cytidylyltransferase family. In terms of assembly, homodimer.

It catalyses the reaction D-glycero-beta-D-manno-heptose 7-phosphate + ATP = D-glycero-beta-D-manno-heptose 1,7-bisphosphate + ADP + H(+). It carries out the reaction D-glycero-beta-D-manno-heptose 1-phosphate + ATP + H(+) = ADP-D-glycero-beta-D-manno-heptose + diphosphate. The protein operates within nucleotide-sugar biosynthesis; ADP-L-glycero-beta-D-manno-heptose biosynthesis; ADP-L-glycero-beta-D-manno-heptose from D-glycero-beta-D-manno-heptose 7-phosphate: step 1/4. It participates in nucleotide-sugar biosynthesis; ADP-L-glycero-beta-D-manno-heptose biosynthesis; ADP-L-glycero-beta-D-manno-heptose from D-glycero-beta-D-manno-heptose 7-phosphate: step 3/4. Its function is as follows. Catalyzes the phosphorylation of D-glycero-D-manno-heptose 7-phosphate at the C-1 position to selectively form D-glycero-beta-D-manno-heptose-1,7-bisphosphate. In terms of biological role, catalyzes the ADP transfer from ATP to D-glycero-beta-D-manno-heptose 1-phosphate, yielding ADP-D-glycero-beta-D-manno-heptose. The sequence is that of Bifunctional protein HldE from Shewanella sp. (strain W3-18-1).